The following is a 486-amino-acid chain: Na(+)/H(+) antiporter NhaA 2 (486 aa).

Helical transmembrane passes span 58-78 (GGLL…TAPG), 102-122 (LTDW…GLEL), 138-158 (ALPV…CLAL), 168-188 (AWAI…SLAG), 198-218 (VLLG…ALGL), 220-240 (HGIN…TALA), 260-280 (ISLH…GLLV), 300-320 (LGPI…TGVS), 338-358 (VAVG…WLAV), 374-394 (LVPL…ITRL), and 404-424 (GAST…LTAL). The interval 432-486 (GAPATRGSSRPATQVGGVAGPIPQTRRESDGGPTGGQEPPPARVRRAPPASPHPR) is disordered.

It belongs to the NhaA Na(+)/H(+) (TC 2.A.33) antiporter family.

It is found in the cell membrane. The catalysed reaction is Na(+)(in) + 2 H(+)(out) = Na(+)(out) + 2 H(+)(in). Its function is as follows. Na(+)/H(+) antiporter that extrudes sodium in exchange for external protons. This Frankia alni (strain DSM 45986 / CECT 9034 / ACN14a) protein is Na(+)/H(+) antiporter NhaA 2.